A 76-amino-acid polypeptide reads, in one-letter code: Putative snRNP Sm-like protein (76 aa).

Positions 4–76 (RPLDVIHKSL…VLAISPTEEG (73 aa)) constitute a Sm domain.

It belongs to the snRNP Sm proteins family.

This Pyrococcus furiosus (strain ATCC 43587 / DSM 3638 / JCM 8422 / Vc1) protein is Putative snRNP Sm-like protein.